Reading from the N-terminus, the 138-residue chain is ATP synthase epsilon chain (138 aa).

The protein belongs to the ATPase epsilon chain family. As to quaternary structure, F-type ATPases have 2 components, CF(1) - the catalytic core - and CF(0) - the membrane proton channel. CF(1) has five subunits: alpha(3), beta(3), gamma(1), delta(1), epsilon(1). CF(0) has three main subunits: a, b and c.

It is found in the cell inner membrane. Its function is as follows. Produces ATP from ADP in the presence of a proton gradient across the membrane. This chain is ATP synthase epsilon chain, found in Idiomarina loihiensis (strain ATCC BAA-735 / DSM 15497 / L2-TR).